We begin with the raw amino-acid sequence, 376 residues long: Sulfate/thiosulfate import ATP-binding protein CysA 1 (376 aa).

In terms of domain architecture, ABC transporter spans 3–237 (IRLTNISKKF…PNSRFVFDFL (235 aa)). Position 35–42 (35–42 (GPSGSGKT)) interacts with ATP.

The protein belongs to the ABC transporter superfamily. Sulfate/tungstate importer (TC 3.A.1.6) family. In terms of assembly, the complex is composed of two ATP-binding proteins (CysA), two transmembrane proteins (CysT and CysW) and a solute-binding protein (CysP).

The protein localises to the cell inner membrane. The catalysed reaction is sulfate(out) + ATP + H2O = sulfate(in) + ADP + phosphate + H(+). The enzyme catalyses thiosulfate(out) + ATP + H2O = thiosulfate(in) + ADP + phosphate + H(+). Part of the ABC transporter complex CysAWTP involved in sulfate/thiosulfate import. Responsible for energy coupling to the transport system. The chain is Sulfate/thiosulfate import ATP-binding protein CysA 1 from Shewanella oneidensis (strain ATCC 700550 / JCM 31522 / CIP 106686 / LMG 19005 / NCIMB 14063 / MR-1).